A 224-amino-acid polypeptide reads, in one-letter code: Urease accessory protein UreF (224 aa).

The protein belongs to the UreF family. As to quaternary structure, ureD, UreF and UreG form a complex that acts as a GTP-hydrolysis-dependent molecular chaperone, activating the urease apoprotein by helping to assemble the nickel containing metallocenter of UreC. The UreE protein probably delivers the nickel.

It localises to the cytoplasm. Required for maturation of urease via the functional incorporation of the urease nickel metallocenter. The protein is Urease accessory protein UreF of Pseudomonas putida (strain ATCC 47054 / DSM 6125 / CFBP 8728 / NCIMB 11950 / KT2440).